Reading from the N-terminus, the 477-residue chain is Glutamyl-tRNA reductase (477 aa).

Residues 49–52 (TCNR), serine 109, 114–116 (EGQ), and glutamine 120 contribute to the substrate site. The Nucleophile role is filled by cysteine 50. NADP(+) is bound at residue 221 to 226 (GAGSMS).

Belongs to the glutamyl-tRNA reductase family. In terms of assembly, homodimer.

The catalysed reaction is (S)-4-amino-5-oxopentanoate + tRNA(Glu) + NADP(+) = L-glutamyl-tRNA(Glu) + NADPH + H(+). The protein operates within porphyrin-containing compound metabolism; protoporphyrin-IX biosynthesis; 5-aminolevulinate from L-glutamyl-tRNA(Glu): step 1/2. Functionally, catalyzes the NADPH-dependent reduction of glutamyl-tRNA(Glu) to glutamate 1-semialdehyde (GSA). This is Glutamyl-tRNA reductase from Thermobifida fusca (strain YX).